A 428-amino-acid chain; its full sequence is MEIIFRGAALEVGRSCIEIKTDKSKILLDCGVKLGKEIEYPILDNSIRDVDKVFISHAHLDHSGALPVLFHRKMDVPVITTELSKKLIKVLLKDMVKIAETENKKIPYNNHDVKEAIRHTIPLNYNDKKYYKDFSYELFSAGHIPGSASILLNYQNNKTILYTGDVKLRDTRLTKGADLSYTKDDIDILIIESTYGNSIHPDRKAVELSFIEKIKEILFRGGVALIPVFAVDRAQEILLILNDYNIDAPIYLDGMAVEVTKLMLNYKHMLNESSQLEKALKNVKIIEKSEDRIKAIENLSKNGGIVVTTAGMLDGGPILYYLKLFMHNPKNALLLTGYQVRDSNGRHLIETGKIFIGKDEIKPNLEVCMYNFSCHAGMDELHEIIKKVNPELLIIQHGEEVQATILRNWALEHGFDAITPKLGEKIRI.

Zn(2+)-binding residues include His-57, His-59, Asp-61, His-62, His-143, Asp-165, and His-397.

This sequence belongs to the metallo-beta-lactamase superfamily. RNA-metabolizing metallo-beta-lactamase-like family. Zn(2+) is required as a cofactor.

Its function is as follows. Probably an RNase. In Methanocaldococcus jannaschii (strain ATCC 43067 / DSM 2661 / JAL-1 / JCM 10045 / NBRC 100440) (Methanococcus jannaschii), this protein is Probable RNase MJ4.